The chain runs to 252 residues: Large ribosomal subunit protein uL29m (252 aa).

The transit peptide at methionine 1–serine 39 directs the protein to the mitochondrion. Acidic residues predominate over residues glutamate 233 to glutamate 242. The interval glutamate 233–alanine 252 is disordered.

This sequence belongs to the universal ribosomal protein uL29 family. In terms of assembly, component of the mitochondrial large ribosomal subunit. Mature mitochondrial ribosomes consist of a small (37S) and a large (54S) subunit. The 37S subunit contains at least 33 different proteins and 1 molecule of RNA (15S). The 54S subunit contains at least 45 different proteins and 1 molecule of RNA (21S).

It is found in the mitochondrion. This Botryotinia fuckeliana (strain B05.10) (Noble rot fungus) protein is Large ribosomal subunit protein uL29m (mrpl4).